The following is a 409-amino-acid chain: Threonine dehydratase-like protein AKTS1-1 (409 aa).

Residues 1–21 (MADYLRQVMPENDSDSEALPR) form a disordered region. Position 111 is an N6-(pyridoxal phosphate)lysine (lysine 111). Pyridoxal 5'-phosphate-binding positions include asparagine 138, 239-243 (GEGSL), and serine 368.

The protein belongs to the serine/threonine dehydratase family. Requires pyridoxal 5'-phosphate as cofactor.

It participates in mycotoxin biosynthesis. Its function is as follows. Threonine dehydratase-like protein; part of the gene clusters that mediate the biosynthesis of the host-selective toxins (HSTs) AK-toxins responsible for Japanese pear black spot disease by the Japanese pear pathotype. AK-toxins are esters of 9,10-epoxy 8-hydroxy 9-methyldecatrienoic acid (EDA). On cellular level, AK-toxins affect plasma membrane of susceptible cells and cause a sudden increase in loss of K(+) after a few minutes of toxin treatment. The acyl-CoA ligase AKT1, the hydrolase AKT2 and enoyl-CoA hydratase AKT3 are all involved in the biosynthesis of the AK-, AF- and ACT-toxin common 9,10-epoxy-8-hydroxy-9-methyl-decatrienoic acid (EDA) structural moiety. Part of the EDA biosynthesis occurs in the peroxisome since these 3 enzymes are localized in peroxisomes. The exact roles of the 3 enzymes, as well as of additional AK-toxin clusters enzymes, including AKT4, AKT6 and AKTS1, have still to be elucidated. The Cytochrome P450 monooxygenase AKT7 on the other side functions to limit production of EDA and AK-toxin, probably via the catalysis of a side reaction of EDA or its precursor. The polypeptide is Threonine dehydratase-like protein AKTS1-1 (Alternaria alternata (Alternaria rot fungus)).